Here is a 125-residue protein sequence, read N- to C-terminus: Ribonuclease P protein component (125 aa).

It belongs to the RnpA family. As to quaternary structure, consists of a catalytic RNA component (M1 or rnpB) and a protein subunit.

The catalysed reaction is Endonucleolytic cleavage of RNA, removing 5'-extranucleotides from tRNA precursor.. Its function is as follows. RNaseP catalyzes the removal of the 5'-leader sequence from pre-tRNA to produce the mature 5'-terminus. It can also cleave other RNA substrates such as 4.5S RNA. The protein component plays an auxiliary but essential role in vivo by binding to the 5'-leader sequence and broadening the substrate specificity of the ribozyme. The polypeptide is Ribonuclease P protein component (Ruegeria pomeroyi (strain ATCC 700808 / DSM 15171 / DSS-3) (Silicibacter pomeroyi)).